The chain runs to 286 residues: uncharacterized protein (286 aa).

A Radical SAM core domain is found at 36–256; it reads ENPQHHPSIE…IKGCLLVQLK (221 aa). The [4Fe-4S] cluster site is built by Cys50, Cys54, and Cys57.

[4Fe-4S] cluster serves as cofactor.

This is an uncharacterized protein from Methanocaldococcus jannaschii (strain ATCC 43067 / DSM 2661 / JAL-1 / JCM 10045 / NBRC 100440) (Methanococcus jannaschii).